Consider the following 473-residue polypeptide: Allene oxide synthase CYP74A2 (473 aa).

Heme b contacts are provided by K88, H119, and K123. (13S)-hydroperoxy-(9Z,11E)-octadecadienoate contacts are provided by S199 and K282. Heme b-binding residues include K424 and C426.

This sequence belongs to the cytochrome P450 family. The cofactor is heme b.

It catalyses the reaction (13S)-hydroperoxy-(9Z,11E,15Z)-octadecatrienoate = (9Z,13S,15Z)-12,13-epoxyoctadeca-9,11,15-trienoate + H2O. It carries out the reaction (13S)-hydroperoxy-(9Z,11E)-octadecadienoate = (9Z,13S)-12,13-epoxyoctadeca-9,11-dienoate + H2O. It functions in the pathway lipid metabolism; oxylipin biosynthesis. Its function is as follows. Cytochrome P450 enzyme involved in the biosynthesis of oxylipin jasmonates, important phytohormones acting as growth regulators and signaling molecules for plant defense. Functions as an allene oxide synthase that converts hydroperoxy fatty acids to unstable allene epoxides. Catalyzes the dehydration of 13-HPOTE ((13S)-hydroperoxy-(9Z,11E,15Z)-octadecatrienoate). Also catalyzes the dehydration of 13-HPODE ((13S)-hydroperoxy-(9Z,11E)-octadecadienoate). The protein is Allene oxide synthase CYP74A2 of Parthenium argentatum (Guayule rubber plant).